A 314-amino-acid chain; its full sequence is Protoheme IX farnesyltransferase (314 aa).

The next 7 membrane-spanning stretches (helical) occupy residues 58–78 (LWLV…ASVF), 107–127 (AALV…YVWV), 130–150 (LSAA…TMLL), 173–193 (WTAV…VVFF), 227–247 (VGRQ…LLWP), 248–268 (VAGT…VFLL), and 294–314 (SSNL…LLAG).

It belongs to the UbiA prenyltransferase family. Protoheme IX farnesyltransferase subfamily.

The protein localises to the cell membrane. It carries out the reaction heme b + (2E,6E)-farnesyl diphosphate + H2O = Fe(II)-heme o + diphosphate. The protein operates within porphyrin-containing compound metabolism; heme O biosynthesis; heme O from protoheme: step 1/1. Functionally, converts heme B (protoheme IX) to heme O by substitution of the vinyl group on carbon 2 of heme B porphyrin ring with a hydroxyethyl farnesyl side group. This chain is Protoheme IX farnesyltransferase, found in Nocardioides sp. (strain ATCC BAA-499 / JS614).